The chain runs to 313 residues: Porphobilinogen deaminase (313 aa).

S-(dipyrrolylmethanemethyl)cysteine is present on Cys241.

Belongs to the HMBS family. Monomer. The cofactor is dipyrromethane.

It carries out the reaction 4 porphobilinogen + H2O = hydroxymethylbilane + 4 NH4(+). It participates in porphyrin-containing compound metabolism; protoporphyrin-IX biosynthesis; coproporphyrinogen-III from 5-aminolevulinate: step 2/4. It functions in the pathway porphyrin-containing compound metabolism; chlorophyll biosynthesis. Tetrapolymerization of the monopyrrole PBG into the hydroxymethylbilane pre-uroporphyrinogen in several discrete steps. The sequence is that of Porphobilinogen deaminase from Chlorobium limicola (strain DSM 245 / NBRC 103803 / 6330).